The following is a 199-amino-acid chain: Holliday junction branch migration complex subunit RuvA (199 aa).

The segment at 1 to 64 (MIGRISGLLL…EDGHFLYGFA (64 aa)) is domain I. Residues 65-143 (TDEERTAFRQ…KALPQVAGAR (79 aa)) are domain II. A flexible linker region spans residues 144-154 (LAAVAGGAPDA). A domain III region spans residues 154–199 (AKSDILNALLALGYNEKEALGAMKGLAEDTGVSDGIRQALKLLSKA).

Belongs to the RuvA family. In terms of assembly, homotetramer. Forms an RuvA(8)-RuvB(12)-Holliday junction (HJ) complex. HJ DNA is sandwiched between 2 RuvA tetramers; dsDNA enters through RuvA and exits via RuvB. An RuvB hexamer assembles on each DNA strand where it exits the tetramer. Each RuvB hexamer is contacted by two RuvA subunits (via domain III) on 2 adjacent RuvB subunits; this complex drives branch migration. In the full resolvosome a probable DNA-RuvA(4)-RuvB(12)-RuvC(2) complex forms which resolves the HJ.

Its subcellular location is the cytoplasm. Its function is as follows. The RuvA-RuvB-RuvC complex processes Holliday junction (HJ) DNA during genetic recombination and DNA repair, while the RuvA-RuvB complex plays an important role in the rescue of blocked DNA replication forks via replication fork reversal (RFR). RuvA specifically binds to HJ cruciform DNA, conferring on it an open structure. The RuvB hexamer acts as an ATP-dependent pump, pulling dsDNA into and through the RuvAB complex. HJ branch migration allows RuvC to scan DNA until it finds its consensus sequence, where it cleaves and resolves the cruciform DNA. The protein is Holliday junction branch migration complex subunit RuvA of Azoarcus sp. (strain BH72).